A 142-amino-acid polypeptide reads, in one-letter code: Large ribosomal subunit protein uL11 (142 aa).

The protein belongs to the universal ribosomal protein uL11 family. Part of the ribosomal stalk of the 50S ribosomal subunit. Interacts with L10 and the large rRNA to form the base of the stalk. L10 forms an elongated spine to which L12 dimers bind in a sequential fashion forming a multimeric L10(L12)X complex. In terms of processing, one or more lysine residues are methylated.

Functionally, forms part of the ribosomal stalk which helps the ribosome interact with GTP-bound translation factors. The sequence is that of Large ribosomal subunit protein uL11 from Alcanivorax borkumensis (strain ATCC 700651 / DSM 11573 / NCIMB 13689 / SK2).